Reading from the N-terminus, the 489-residue chain is Putative BTB/POZ domain-containing protein R773 (489 aa).

The BTB domain occupies 3 to 73; that stretch reads SNIELVITDE…GNTSYKFQDK (71 aa).

The protein belongs to the mimivirus BTB/WD family.

This chain is Putative BTB/POZ domain-containing protein R773, found in Acanthamoeba polyphaga (Amoeba).